Reading from the N-terminus, the 2058-residue chain is Protein Daple (2058 aa).

Positions 11 to 131 (HFLESPLVTW…KILLLMLGCA (121 aa)) constitute a Calponin-homology (CH) domain. Coiled-coil stretches lie at residues 195–221 (HLKR…DYLQ), 247–428 (EDKK…SMNE), 455–1016 (ELNE…LRGA), 1043–1082 (ELLK…NLNL), and 1108–1388 (ANLQ…KFYD). 7 disordered regions span residues 1406 to 1444 (LIKP…MRPL), 1480 to 1592 (HRMS…EDMI), 1617 to 1655 (TKNR…PGSE), 1696 to 1724 (LHPS…LPSA), 1831 to 1857 (YSAT…RGNS), 1940 to 1959 (LALP…ASSL), and 1988 to 2051 (PVRP…PQTV). Positions 1409–1418 (PKKEPSRESV) are enriched in basic and acidic residues. Residues 1419 to 1429 (KSPTDVQSKTM) show a composition bias toward polar residues. The span at 1494 to 1506 (GPEHLSRSRRMES) shows a compositional bias: basic and acidic residues. Residues 1552-1577 (NAGSSRVPWTSSLEVSRSASNSSSPL) are compositionally biased toward polar residues. 2 consecutive short sequence motifs (GBA) follow at residues 1653–1675 (GSEM…PSRR) and 1676–1697 (HSLN…ETLH). Polar residues predominate over residues 1831-1841 (YSATSSSQSPE). Residues 2039 to 2048 (PASPDPSADP) are compositionally biased toward low complexity. Residues 2055–2058 (YGCV) carry the PDZ-binding motif.

Belongs to the CCDC88 family. As to quaternary structure, interacts with dvl2/dsh via the PDZ-binding motif. Expressed weakly in gastrulae, with slightly stronger expression in the dorsal region. In neurulae, expressed in the neural plate with strong expression in the presumptive mesencephalic region. At the tailbud stage, expressed in somatic cells and in part of the tail. Also strongly expressed in regions of the head including eye vesicles, otic vesicles, olfactory placode and the pharyngeal cavity.

The protein localises to the cytoplasm. The protein resides in the cell junction. Positive regulator of Wnt signaling, acting synergistically with dvl2/dsh. Functions upstream of ctnnb1/beta-catenin in the canonical Wnt pathway, and also activates jnk in the Wnt/planar cell polarity (PCP) pathway. Acts as a non-receptor guanine nucleotide exchange factor which binds to and activates guanine nucleotide-binding protein G(i) alpha subunits. This promotes apical cell constriction and subsequent bending of the neural plate during neurulation via arhgef18. This chain is Protein Daple (ccdc88c), found in Xenopus laevis (African clawed frog).